Consider the following 79-residue polypeptide: U-scoloptoxin(15)-Sm1a (79 aa).

A signal peptide spans 1 to 25 (MKMNVVVLSVVVLLLFIANIQQTEA).

This sequence belongs to the scoloptoxin-15 family. Contains 2 disulfide bonds. Expressed by the venom gland.

The protein localises to the secreted. This is U-scoloptoxin(15)-Sm1a from Scolopendra morsitans (Tanzanian blue ringleg centipede).